The primary structure comprises 423 residues: Glutaminase (423 aa).

A glutaminase region spans residues 27-312 (GEVAQYIPQL…LSEDMGLHLM (286 aa)). The substrate site is built by Ser-69, Asn-119, Glu-165, Asn-172, Tyr-196, Tyr-248, and Val-266. The STAS domain maps to 321–423 (AVRAIEERGD…SPQVDDPEEL (103 aa)).

The protein belongs to the glutaminase family. In terms of assembly, homotetramer.

The catalysed reaction is L-glutamine + H2O = L-glutamate + NH4(+). In Corynebacterium efficiens (strain DSM 44549 / YS-314 / AJ 12310 / JCM 11189 / NBRC 100395), this protein is Glutaminase (glsA).